Reading from the N-terminus, the 505-residue chain is ATP synthase subunit alpha (505 aa).

Glycine 172 to threonine 179 provides a ligand contact to ATP.

This sequence belongs to the ATPase alpha/beta chains family. F-type ATPases have 2 components, CF(1) - the catalytic core - and CF(0) - the membrane proton channel. CF(1) has five subunits: alpha(3), beta(3), gamma(1), delta(1), epsilon(1). CF(0) has three main subunits: a(1), b(2) and c(9-12). The alpha and beta chains form an alternating ring which encloses part of the gamma chain. CF(1) is attached to CF(0) by a central stalk formed by the gamma and epsilon chains, while a peripheral stalk is formed by the delta and b chains.

The protein localises to the cell inner membrane. It carries out the reaction ATP + H2O + 4 H(+)(in) = ADP + phosphate + 5 H(+)(out). Produces ATP from ADP in the presence of a proton gradient across the membrane. The alpha chain is a regulatory subunit. The protein is ATP synthase subunit alpha of Syntrophobacter fumaroxidans (strain DSM 10017 / MPOB).